The chain runs to 445 residues: Phosphoglucosamine mutase (445 aa).

Catalysis depends on Ser-102, which acts as the Phosphoserine intermediate. Mg(2+) is bound by residues Ser-102, Asp-241, Asp-243, and Asp-245. The residue at position 102 (Ser-102) is a Phosphoserine.

This sequence belongs to the phosphohexose mutase family. Mg(2+) serves as cofactor. Post-translationally, activated by phosphorylation.

It carries out the reaction alpha-D-glucosamine 1-phosphate = D-glucosamine 6-phosphate. In terms of biological role, catalyzes the conversion of glucosamine-6-phosphate to glucosamine-1-phosphate. This is Phosphoglucosamine mutase from Haemophilus influenzae (strain PittEE).